The chain runs to 358 residues: Histidinol-phosphate aminotransferase (358 aa).

At Lys-211 the chain carries N6-(pyridoxal phosphate)lysine.

The protein belongs to the class-II pyridoxal-phosphate-dependent aminotransferase family. Histidinol-phosphate aminotransferase subfamily. In terms of assembly, homodimer. Requires pyridoxal 5'-phosphate as cofactor.

The enzyme catalyses L-histidinol phosphate + 2-oxoglutarate = 3-(imidazol-4-yl)-2-oxopropyl phosphate + L-glutamate. It functions in the pathway amino-acid biosynthesis; L-histidine biosynthesis; L-histidine from 5-phospho-alpha-D-ribose 1-diphosphate: step 7/9. In Blochmanniella pennsylvanica (strain BPEN), this protein is Histidinol-phosphate aminotransferase.